We begin with the raw amino-acid sequence, 298 residues long: Protease HtpX homolog (298 aa).

2 consecutive transmembrane segments (helical) span residues 15-35 and 38-58; these read LIMV…GYLF and SPWT…LIMW. Zn(2+) is bound at residue histidine 143. Glutamate 144 is a catalytic residue. Histidine 147 serves as a coordination point for Zn(2+). Helical transmembrane passes span 153–173 and 197–217; these read ILLS…SGIA and IIFK…SASL. A Zn(2+)-binding site is contributed by glutamate 227.

Belongs to the peptidase M48B family. Requires Zn(2+) as cofactor.

It localises to the cell membrane. In Lactobacillus acidophilus (strain ATCC 700396 / NCK56 / N2 / NCFM), this protein is Protease HtpX homolog.